An 806-amino-acid polypeptide reads, in one-letter code: Glycerol-3-phosphate acyltransferase (806 aa).

The HXXXXD motif motif lies at 305-310; sequence CHRSHM.

Belongs to the GPAT/DAPAT family.

It is found in the cell inner membrane. It carries out the reaction sn-glycerol 3-phosphate + an acyl-CoA = a 1-acyl-sn-glycero-3-phosphate + CoA. It functions in the pathway phospholipid metabolism; CDP-diacylglycerol biosynthesis; CDP-diacylglycerol from sn-glycerol 3-phosphate: step 1/3. The polypeptide is Glycerol-3-phosphate acyltransferase (Salmonella agona (strain SL483)).